The sequence spans 292 residues: Cyclin-dependent kinase 5 (292 aa).

Positions 4-286 (YEKLEKIGEG…AEEALQHPYF (283 aa)) constitute a Protein kinase domain. Residues 10-18 (IGEGTYGTV) and K33 contribute to the ATP site. The residue at position 15 (Y15) is a Phosphotyrosine; by ABL1, EPHA4 and FYN. T17 carries the post-translational modification Phosphothreonine. Position 56 is an N6-acetyllysine (K56). Residue S72 is modified to Phosphoserine. The active-site Proton acceptor is the D126. S159 carries the phosphoserine modification.

This sequence belongs to the protein kinase superfamily. CMGC Ser/Thr protein kinase family. CDC2/CDKX subfamily. As to quaternary structure, heterodimer composed of a catalytic subunit CDK5 and a regulatory subunit CDK5R1 (p25) and macromolecular complex composed of at least CDK5, CDK5R1 (p35) and CDK5RAP1 or CDK5RAP2 or CDK5RAP3. Only the heterodimer shows kinase activity. Under neurotoxic stress and neuronal injury conditions, p35 is cleaved by calpain to generate p25 that hyperactivates CDK5, that becomes functionally disabled and often toxic. Found in a trimolecular complex with CABLES1 and ABL1. Interacts with CABLES1 and CABLES2. Interacts with AATK and GSTP1. Binds to HDAC1 when in complex with p25. Interaction with myristoylation p35 promotes CDK5 association with membranes. Both isoforms 1 and 2 interacts with beta-catenin/CTNNB1. Interacts with delta-catenin/CTNND2 and APEX1. Interacts with P53/TP53 in neurons. Interacts with EPHA4; may mediate the activation of NGEF by EPHA4. Interacts with PTK2/FAK1. The complex p35/CDK5 interacts with CLOCK. Interacts with HTR6. In terms of processing, phosphorylation on Tyr-15 by ABL1 and FYN, and on Ser-159 by casein kinase 1 promotes kinase activity. By contrast, phosphorylation at Thr-14 inhibits activity. Phosphorylation at Ser-159 is essential for maximal catalytic activity. Ubiquitously expressed. Accumulates in cortical neurons (at protein level). As to expression, expressed in the testis, skeletal muscle, colon, bone marrow and ovary.

The protein localises to the cytoplasm. Its subcellular location is the nucleus. It localises to the cell membrane. The protein resides in the perikaryon. It is found in the cell projection. The protein localises to the lamellipodium. Its subcellular location is the growth cone. It localises to the postsynaptic density. The protein resides in the synapse. The enzyme catalyses L-seryl-[protein] + ATP = O-phospho-L-seryl-[protein] + ADP + H(+). It catalyses the reaction L-threonyl-[protein] + ATP = O-phospho-L-threonyl-[protein] + ADP + H(+). With respect to regulation, inhibited by 2-(1-ethyl-2-hydroxyethylamino)-6-benzylamino-9-isopropylpurine (roscovitine), 1-isopropyl-4-aminobenzyl-6-ether-linked benzimidazoles, resveratrol, AT-7519 and olomoucine. Activated by CDK5R1 (p35) and CDK5R2 (p39) during the development of the nervous system; degradation of CDK5R1 (p35) and CDK5R2 (p39) by proteasome result in down regulation of kinase activity, during this process, CDK5 phosphorylates p35 and induces its ubiquitination and subsequent degradation. Kinase activity is mainly determined by the amount of p35 available and subcellular location; reversible association to plasma membrane inhibits activity. Long-term inactivation as well as CDK5R1 (p25)-mediated hyperactivation of CDK5 triggers cell death. The pro-death activity of hyperactivated CDK5 is suppressed by membrane association of CDK5, via myristoylation of p35. Brain-derived neurotrophic factor, glial-derived neurotrophic factor, nerve growth factor (NGF), retinoic acid, laminin and neuregulin promote activity. Neurotoxicity enhances nuclear activity, thus leading to MEF2 phosphorylation and inhibition prior to apoptosis of cortical neurons. Repression by GSTP1 via p25/p35 translocation prevents neurodegeneration. Functionally, proline-directed serine/threonine-protein kinase essential for neuronal cell cycle arrest and differentiation and may be involved in apoptotic cell death in neuronal diseases by triggering abortive cell cycle re-entry. Interacts with D1 and D3-type G1 cyclins. Phosphorylates SRC, NOS3, VIM/vimentin, p35/CDK5R1, MEF2A, SIPA1L1, SH3GLB1, PXN, PAK1, MCAM/MUC18, SEPT5, SYN1, DNM1, AMPH, SYNJ1, CDK16, RAC1, RHOA, CDC42, TONEBP/NFAT5, MAPT/TAU, MAP1B, histone H1, p53/TP53, HDAC1, APEX1, PTK2/FAK1, huntingtin/HTT, ATM, MAP2, NEFH and NEFM. Regulates several neuronal development and physiological processes including neuronal survival, migration and differentiation, axonal and neurite growth, synaptogenesis, oligodendrocyte differentiation, synaptic plasticity and neurotransmission, by phosphorylating key proteins. Negatively regulates the CACNA1B/CAV2.2 -mediated Ca(2+) release probability at hippocampal neuronal soma and synaptic terminals. Activated by interaction with CDK5R1 (p35) and CDK5R2 (p39), especially in postmitotic neurons, and promotes CDK5R1 (p35) expression in an autostimulation loop. Phosphorylates many downstream substrates such as Rho and Ras family small GTPases (e.g. PAK1, RAC1, RHOA, CDC42) or microtubule-binding proteins (e.g. MAPT/TAU, MAP2, MAP1B), and modulates actin dynamics to regulate neurite growth and/or spine morphogenesis. Also phosphorylates exocytosis associated proteins such as MCAM/MUC18, SEPT5, SYN1, and CDK16/PCTAIRE1 as well as endocytosis associated proteins such as DNM1, AMPH and SYNJ1 at synaptic terminals. In the mature central nervous system (CNS), regulates neurotransmitter movements by phosphorylating substrates associated with neurotransmitter release and synapse plasticity; synaptic vesicle exocytosis, vesicles fusion with the presynaptic membrane, and endocytosis. Promotes cell survival by activating anti-apoptotic proteins BCL2 and STAT3, and negatively regulating of JNK3/MAPK10 activity. Phosphorylation of p53/TP53 in response to genotoxic and oxidative stresses enhances its stabilization by preventing ubiquitin ligase-mediated proteasomal degradation, and induces transactivation of p53/TP53 target genes, thus regulating apoptosis. Phosphorylation of p35/CDK5R1 enhances its stabilization by preventing calpain-mediated proteolysis producing p25/CDK5R1 and avoiding ubiquitin ligase-mediated proteasomal degradation. During aberrant cell-cycle activity and DNA damage, p25/CDK5 activity elicits cell-cycle activity and double-strand DNA breaks that precedes neuronal death by deregulating HDAC1. DNA damage triggered phosphorylation of huntingtin/HTT in nuclei of neurons protects neurons against polyglutamine expansion as well as DNA damage mediated toxicity. Phosphorylation of PXN reduces its interaction with PTK2/FAK1 in matrix-cell focal adhesions (MCFA) during oligodendrocytes (OLs) differentiation. Negative regulator of Wnt/beta-catenin signaling pathway. Activator of the GAIT (IFN-gamma-activated inhibitor of translation) pathway, which suppresses expression of a post-transcriptional regulon of proinflammatory genes in myeloid cells; phosphorylates the linker domain of glutamyl-prolyl tRNA synthetase (EPRS) in a IFN-gamma-dependent manner, the initial event in assembly of the GAIT complex. Phosphorylation of SH3GLB1 is required for autophagy induction in starved neurons. Phosphorylation of TONEBP/NFAT5 in response to osmotic stress mediates its rapid nuclear localization. MEF2 is inactivated by phosphorylation in nucleus in response to neurotoxin, thus leading to neuronal apoptosis. APEX1 AP-endodeoxyribonuclease is repressed by phosphorylation, resulting in accumulation of DNA damage and contributing to neuronal death. NOS3 phosphorylation down regulates NOS3-derived nitrite (NO) levels. SRC phosphorylation mediates its ubiquitin-dependent degradation and thus leads to cytoskeletal reorganization. May regulate endothelial cell migration and angiogenesis via the modulation of lamellipodia formation. Involved in dendritic spine morphogenesis by mediating the EFNA1-EPHA4 signaling. The complex p35/CDK5 participates in the regulation of the circadian clock by modulating the function of CLOCK protein: phosphorylates CLOCK at 'Thr-451' and 'Thr-461' and regulates the transcriptional activity of the CLOCK-BMAL1 heterodimer in association with altered stability and subcellular distribution. The polypeptide is Cyclin-dependent kinase 5 (Homo sapiens (Human)).